Reading from the N-terminus, the 264-residue chain is Thiazole synthase (264 aa).

K106 (schiff-base intermediate with DXP) is an active-site residue. 1-deoxy-D-xylulose 5-phosphate-binding positions include G167, 193–194, and 215–216; these read AG and NT.

Belongs to the ThiG family. As to quaternary structure, homotetramer. Forms heterodimers with either ThiH or ThiS.

The protein resides in the cytoplasm. It catalyses the reaction [ThiS sulfur-carrier protein]-C-terminal-Gly-aminoethanethioate + 2-iminoacetate + 1-deoxy-D-xylulose 5-phosphate = [ThiS sulfur-carrier protein]-C-terminal Gly-Gly + 2-[(2R,5Z)-2-carboxy-4-methylthiazol-5(2H)-ylidene]ethyl phosphate + 2 H2O + H(+). It participates in cofactor biosynthesis; thiamine diphosphate biosynthesis. In terms of biological role, catalyzes the rearrangement of 1-deoxy-D-xylulose 5-phosphate (DXP) to produce the thiazole phosphate moiety of thiamine. Sulfur is provided by the thiocarboxylate moiety of the carrier protein ThiS. In vitro, sulfur can be provided by H(2)S. This Xylella fastidiosa (strain Temecula1 / ATCC 700964) protein is Thiazole synthase.